A 469-amino-acid chain; its full sequence is GTPase Der (469 aa).

EngA-type G domains follow at residues 3-166 and 177-350; these read PVIA…PEDE and LRLA…ESAN. Residues 9–16, 56–60, 118–121, 183–190, 230–234, and 295–298 contribute to the GTP site; these read GRPNVGKS, DTGGI, NKVD, DTAGV, and NKWD. Residues 351–435 form the KH-like domain; sequence LKVSPAKLTQ…PVKIEFKTSE (85 aa).

This sequence belongs to the TRAFAC class TrmE-Era-EngA-EngB-Septin-like GTPase superfamily. EngA (Der) GTPase family. Associates with the 50S ribosomal subunit.

Functionally, GTPase that plays an essential role in the late steps of ribosome biogenesis. In Acinetobacter baumannii (strain SDF), this protein is GTPase Der.